The chain runs to 244 residues: uncharacterized protein (244 aa).

The protein belongs to the MtxX family.

This is an uncharacterized protein from Methanocaldococcus jannaschii (strain ATCC 43067 / DSM 2661 / JAL-1 / JCM 10045 / NBRC 100440) (Methanococcus jannaschii).